The chain runs to 447 residues: Xylose isomerase (447 aa).

Active-site residues include His102 and Asp105. Glu233, Glu269, His272, Asp297, Asp308, Asp310, and Asp340 together coordinate Mg(2+).

It belongs to the xylose isomerase family. As to quaternary structure, homotetramer. It depends on Mg(2+) as a cofactor.

The protein localises to the cytoplasm. The catalysed reaction is alpha-D-xylose = alpha-D-xylulofuranose. The protein is Xylose isomerase of Pediococcus pentosaceus (strain ATCC 25745 / CCUG 21536 / LMG 10740 / 183-1w).